The following is a 118-amino-acid chain: Mitochondrial import inner membrane translocase subunit Tim10 B (118 aa).

Residues 31 to 55 (CFQRCVPSLHHRALDAEEEACLHSC) carry the Twin CX3C motif motif. 2 disulfide bridges follow: Cys31–Cys55 and Cys35–Cys51. Residues 89–118 (SAVPHATAEQLETSPSRSLPSGNLGKGGAG) form a disordered region. Residues 98–109 (QLETSPSRSLPS) are compositionally biased toward polar residues.

This sequence belongs to the small Tim family. In terms of assembly, component of the TIM22 complex, which core is composed of TIMM22, associated with TIMM10 (TIMM10A and/or TIMM10B), TIMM9, AGK and TIMM29.

Its subcellular location is the mitochondrion inner membrane. In terms of biological role, component of the TIM22 complex, a complex that mediates the import and insertion of multi-pass transmembrane proteins into the mitochondrial inner membrane. The TIM22 complex forms a twin-pore translocase that uses the membrane potential as the external driving force. In the TIM22 complex, it may act as a docking point for the soluble 70 kDa complex that guides the target proteins in transit through the aqueous mitochondrial intermembrane space. The protein is Mitochondrial import inner membrane translocase subunit Tim10 B (TIMM10B) of Bos taurus (Bovine).